The primary structure comprises 411 residues: 2,3-bisphosphoglycerate-independent phosphoglycerate mutase (411 aa).

This sequence belongs to the BPG-independent phosphoglycerate mutase family. A-PGAM subfamily.

It catalyses the reaction (2R)-2-phosphoglycerate = (2R)-3-phosphoglycerate. It functions in the pathway carbohydrate degradation; glycolysis; pyruvate from D-glyceraldehyde 3-phosphate: step 3/5. Functionally, catalyzes the interconversion of 2-phosphoglycerate and 3-phosphoglycerate. The polypeptide is 2,3-bisphosphoglycerate-independent phosphoglycerate mutase (Thermococcus gammatolerans (strain DSM 15229 / JCM 11827 / EJ3)).